Consider the following 250-residue polypeptide: Protein KPLCE (250 aa).

As to expression, skin-specific.

The sequence is that of Protein KPLCE from Homo sapiens (Human).